The chain runs to 409 residues: Elongation factor Tu (409 aa).

The tr-type G domain occupies 10 to 214; sequence KPHVNVGTIG…AVDNYIPTPE (205 aa). Residues 19–26 are G1; the sequence is GHVDHGKT. 19–26 is a GTP binding site; sequence GHVDHGKT. Threonine 26 is a binding site for Mg(2+). The interval 60–64 is G2; the sequence is GITIN. Residues 81 to 84 form a G3 region; it reads DCPG. GTP is bound by residues 81–85 and 136–139; these read DCPGH and NKVD. The tract at residues 136-139 is G4; that stretch reads NKVD. The interval 174–176 is G5; sequence SGL.

It belongs to the TRAFAC class translation factor GTPase superfamily. Classic translation factor GTPase family. EF-Tu/EF-1A subfamily. As to quaternary structure, monomer.

The protein localises to the cytoplasm. It carries out the reaction GTP + H2O = GDP + phosphate + H(+). In terms of biological role, GTP hydrolase that promotes the GTP-dependent binding of aminoacyl-tRNA to the A-site of ribosomes during protein biosynthesis. The chain is Elongation factor Tu from Thermosynechococcus vestitus (strain NIES-2133 / IAM M-273 / BP-1).